The chain runs to 1138 residues: Exportin-6-B (1138 aa).

Positions Ile31 to Ser97 constitute an Importin N-terminal domain. Residues Ser291–Ser307 show a composition bias toward low complexity. Residues Ser291 to Pro315 form a disordered region.

It belongs to the exportin family.

It localises to the nucleus. The protein localises to the cytoplasm. In terms of biological role, mediates the nuclear export of actin and profilin-actin complexes in somatic cells. Oocyte nuclei lack active actin export. Mediates the nuclear export of actin and profilin-actin complexes in somatic cells. The sequence is that of Exportin-6-B (xpo6-b) from Xenopus laevis (African clawed frog).